The chain runs to 492 residues: Cell death protein 6 (492 aa).

Positions 19 to 29 (GNNINGEGSSS) are enriched in low complexity. A disordered region spans residues 19-38 (GNNINGEGSSSPSTSAPQVK). The PID domain occupies 55 to 215 (INGHVEYVAR…YILKKKIVEL (161 aa)). Disordered regions lie at residues 241–385 (TGPP…STAA) and 464–492 (TGDLGGIEGESDYGTPSDRLNPKMMNLKQ). The span at 244-268 (PIYPGLGPPALPLSPMPQGPPPNIP) shows a compositional bias: pro residues. Over residues 300–312 (ASPSVSPASTSPS) the composition is skewed to low complexity. A compositionally biased stretch (pro residues) spans 313-333 (GPAPSIPPPRPPALAPPPPVA). Over residues 373-383 (FDPRAGEKKST) the composition is skewed to basic and acidic residues.

The protein belongs to the ced-6 family. As to quaternary structure, homodimer. Interacts with ced-1. Interacts with E3 ubiquitin-protein ligase trim-21. As to expression, detected in gonadal sheath cells.

Its subcellular location is the cytoplasm. Functionally, may function as an adapter protein in a pathway that mediates recognition and phagocytosis of apoptotic cells during normal development. Promotes engulfment of cells at both early and late stages of apoptosis. Required for actin reorganization around apoptotic cells. Plays a role in protecting dopaminergic neurons from oxidative stress-induced degeneration. Mediates recruitment of E3 ubiquitin-protein ligase trim-21 to the apoptotic cell surface which promotes ubiquitination and degradation of ced-1. This chain is Cell death protein 6, found in Caenorhabditis elegans.